The sequence spans 273 residues: HLA class II histocompatibility antigen, DO beta chain (273 aa).

Positions 1–26 (MGSGWVPWVVALLVNLTRLDSSMTQG) are cleaved as a signal peptide. Positions 27–120 (TDSPEDFVIQ…LGAPFTVGRK (94 aa)) are beta-1. Residues 27–224 (TDSPEDFVIQ…RAQSEYSWRK (198 aa)) lie on the Extracellular side of the membrane. 2 disulfide bridges follow: Cys41-Cys105 and Cys143-Cys199. N-linked (GlcNAc...) asparagine glycosylation occurs at Asn45. The segment at 121–214 (VQPEVTVYPE…SLLSPVSVEW (94 aa)) is beta-2. Residues 123 to 213 (PEVTVYPERT…SSLLSPVSVE (91 aa)) enclose the Ig-like C1-type domain. Residues 215 to 224 (RAQSEYSWRK) form a connecting peptide region. A helical transmembrane segment spans residues 225 to 245 (MLSGIAAFLLGLIFLLVGIVI). Residues 246 to 273 (QLRAQKGYVRTQMSGNEVSRAVLLPQSC) lie on the Cytoplasmic side of the membrane.

The protein belongs to the MHC class II family. Heterodimer of an alpha chain (DOA) and a beta chain (DOB). Forms a heterotetrameric complex with an HLA-DM molecule during intracellular transport in endosomal/lysosomal compartments in B-cells.

It is found in the endosome membrane. The protein resides in the lysosome membrane. Its function is as follows. Important modulator in the HLA class II restricted antigen presentation pathway by interaction with the HLA-DM molecule in B-cells. Modifies peptide exchange activity of HLA-DM. The chain is HLA class II histocompatibility antigen, DO beta chain (HLA-DOB) from Homo sapiens (Human).